Reading from the N-terminus, the 166-residue chain is Putative transmembrane protein ORF166 (166 aa).

3 helical membrane-spanning segments follow: residues 35 to 55 (IILVFLITMPVRFFICIFAGL), 60 to 80 (PICVLINLLPPLAIAIPFVTA), and 124 to 144 (IFCLVGIIIADVLNPILAFIN).

The protein localises to the host membrane. The polypeptide is Putative transmembrane protein ORF166 (Acidianus convivator (ABV)).